The chain runs to 259 residues: Protein snail homolog Sna (259 aa).

Residues 1–20 (MPRSFLVKKHFSASKKPNYS) are SNAG domain. The interval 71-113 (DYKKSPISPSSSDDSSKPLDLTSFSSEDEGGKTSDPPSPASSA) is disordered. C2H2-type zinc fingers lie at residues 119–141 (FQCNLCSKSYSTFAGLSKHKQLH), 150–172 (FSCKYCEKEYVSLGALKMHIRSH), 176–198 (CVCKICGKAFSRPWLLQGHIRTH), 204–226 (FSCTHCNRAFADRSNLRAHLQTH), and 232–255 (YQCKSCSRTFSRMSLLHKHEETGC).

It belongs to the snail C2H2-type zinc-finger protein family. Interacts (via SNAG domain) with limd1 (via LIM domains), wtip (via LIM domains) and ajuba (via LIM domains). Interacts with elp3; the interaction inhibits snai1 ubiquitination and promotes snai1 stability. In terms of processing, ubiquitinated. As to expression, maternal expression is nearly completely restricted to the vegetal hemisphere. Zygotic expression begins in the dorsal marginal zone just before gastrulation (stage 9), and is almost completely absent in the animal hemisphere. At mid-gastrula (stage 11-11.5), expression begins in the ectoderm in an arc surrounding the prospective neural plate. From stage 12, anterior expression is down-regulated, while levels are increased in the prospective neural crest.

The protein resides in the nucleus. In terms of biological role, transcriptional repressor. Acts upstream of snai2/slug, zic5 and other neural crest markers in the specification of the neural crest and neural crest migration. Involved in embryonic mesoderm formation. The protein is Protein snail homolog Sna (snai1) of Xenopus laevis (African clawed frog).